Consider the following 455-residue polypeptide: Chromosomal replication initiator protein DnaA (455 aa).

The segment at 1-75 (MDTNNNIEKE…EILSQNKVGM (75 aa)) is domain I, interacts with DnaA modulators. Positions 75–106 (MHLAHSVDVRIEVAPKIQINAQANINYKAIKT) are domain II. A domain III, AAA+ region region spans residues 107-321 (SVKDSYTFEN…GAIIKISVNA (215 aa)). ATP contacts are provided by G151, G153, K154, and T155. A domain IV, binds dsDNA region spans residues 322-455 (NLMNAPIDLN…DKKTAFNSSE (134 aa)).

It belongs to the DnaA family. As to quaternary structure, oligomerizes as a right-handed, spiral filament on DNA at oriC.

The protein localises to the cytoplasm. Plays an essential role in the initiation and regulation of chromosomal replication. ATP-DnaA binds to the origin of replication (oriC) to initiate formation of the DNA replication initiation complex once per cell cycle. Binds the DnaA box (a 9 base pair repeat at the origin) and separates the double-stranded (ds)DNA. Forms a right-handed helical filament on oriC DNA; dsDNA binds to the exterior of the filament while single-stranded (ss)DNA is stabiized in the filament's interior. The ATP-DnaA-oriC complex binds and stabilizes one strand of the AT-rich DNA unwinding element (DUE), permitting loading of DNA polymerase. After initiation quickly degrades to an ADP-DnaA complex that is not apt for DNA replication. Binds acidic phospholipids. This chain is Chromosomal replication initiator protein DnaA, found in Helicobacter pylori (strain P12).